An 863-amino-acid chain; its full sequence is Chloride channel protein A (863 aa).

Over 1–124 the chain is Cytoplasmic; that stretch reads MFRNNNNDNN…TSKLNHMLKT (124 aa). The interval 48–78 is disordered; that stretch reads ENGLINNNNNSHNNNNGGNNNNHGPSKVTHR. Over residues 49–71 the composition is skewed to low complexity; the sequence is NGLINNNNNSHNNNNGGNNNNHG. The next 7 membrane-spanning stretches (helical) occupy residues 125–145, 171–191, 228–248, 289–309, 324–344, 367–387, and 408–428; these read FGKW…AYLV, IAFL…SLVI, LVSL…GPMI, GAAA…LFGF, TFFA…GFDM, LIPF…FVNL, and VLEV…CAAF. The tract at residues 434–460 is disordered; it reads KTQANGSQTNSLDTSSSSILSSSGDNS. A compositionally biased stretch (low complexity) spans 439–460; that stretch reads GSQTNSLDTSSSSILSSSGDNS. Transmembrane regions (helical) follow at residues 518–538, 539–559, and 561–581; these read IFTI…TTIT, SGLM…ATFG, and LVGQ…ALVG. 2 consecutive CBS domains span residues 661–742 and 816–863; these read MKTE…CHEQ and MNLS…KDLL.

It belongs to the chloride channel (TC 2.A.49) family.

The protein resides in the membrane. In terms of biological role, voltage-gated chloride channel. Chloride channels may have several functions including the regulation of cell volume, membrane potential stabilization and signal transduction. The chain is Chloride channel protein A (clcA) from Dictyostelium discoideum (Social amoeba).